The sequence spans 98 residues: NADH-ubiquinone oxidoreductase chain 4L (98 aa).

Transmembrane regions (helical) follow at residues 1 to 21, 29 to 49, and 61 to 81; these read MSLVYMNIMTAFAVSLTGLLM, SLLCLEGMMLSLFVMATLMIL, and IILLVFAACEAALGLSLLVMV.

It belongs to the complex I subunit 4L family. In terms of assembly, core subunit of respiratory chain NADH dehydrogenase (Complex I) which is composed of 45 different subunits.

The protein localises to the mitochondrion inner membrane. It carries out the reaction a ubiquinone + NADH + 5 H(+)(in) = a ubiquinol + NAD(+) + 4 H(+)(out). Core subunit of the mitochondrial membrane respiratory chain NADH dehydrogenase (Complex I) which catalyzes electron transfer from NADH through the respiratory chain, using ubiquinone as an electron acceptor. Part of the enzyme membrane arm which is embedded in the lipid bilayer and involved in proton translocation. This Pantholops hodgsonii (Chiru) protein is NADH-ubiquinone oxidoreductase chain 4L (MT-ND4L).